The following is a 201-amino-acid chain: Small ribosomal subunit protein uS4c (201 aa).

Residues 23–42 form a disordered region; sequence SKKPRAGSNLRNQLRPGKKS. Residues 89–151 form the S4 RNA-binding domain; it reads MRLDNILFRL…QKSKSLVQNY (63 aa).

This sequence belongs to the universal ribosomal protein uS4 family. In terms of assembly, part of the 30S ribosomal subunit. Contacts protein S5. The interaction surface between S4 and S5 is involved in control of translational fidelity.

The protein localises to the plastid. Its subcellular location is the chloroplast. Its function is as follows. One of the primary rRNA binding proteins, it binds directly to 16S rRNA where it nucleates assembly of the body of the 30S subunit. Functionally, with S5 and S12 plays an important role in translational accuracy. This is Small ribosomal subunit protein uS4c (rps4) from Morus indica (Mulberry).